Consider the following 491-residue polypeptide: Polybrominated aromatic compounds synthase (491 aa).

Residue cysteine 437 participates in heme binding.

Belongs to the cytochrome P450 family. Heme serves as cofactor.

Functionally, cytochrome P450 protein involved in the biosynthesis of polybrominated aromatic organic compounds. In the presence of ferredoxin, ferredoxin reductase and NADH, catalyzes the coupling of bromophenols and bromopyrroles, forming various polybrominated biphenyls and hydroxylated polybrominated diphenyl ethers (OH-BDE). Can also mediate the heterocoupling of 3,5-dibromocatechol. Can also use chlorinated phenolic substrates. 2,3,4-tribromopyrrole could be the physiological substrate. The sequence is that of Polybrominated aromatic compounds synthase from Pseudoalteromonas luteoviolacea (strain 2ta16).